We begin with the raw amino-acid sequence, 626 residues long: 5'-AMP-activated protein kinase catalytic subunit alpha-2 (626 aa).

The segment covering 1 to 24 (MFSHQDRDRDRKEDGGGDGTEMKS) has biased composition (basic and acidic residues). The interval 1–77 (MFSHQDRDRD…GETSTKQQQE (77 aa)) is disordered. A compositionally biased stretch (basic residues) spans 38 to 49 (NLSRKLSAKSRK). The segment covering 58–77 (DNSSKMSSPGGETSTKQQQE) has biased composition (polar residues). One can recognise a Protein kinase domain in the interval 87 to 339 (YILKETLGVG…IKDVIAHEWF (253 aa)). Residues 93–101 (LGVGTFGKV) and Lys116 contribute to the ATP site. Residue Asp210 is the Proton acceptor of the active site. Residue Thr243 is modified to Phosphothreonine; by par-4. A disordered region spans residues 541-568 (SGSASASSSRHASMSMPQKPAGIRGTRT). Positions 542–555 (GSASASSSRHASMS) are enriched in low complexity.

It belongs to the protein kinase superfamily. CAMK Ser/Thr protein kinase family. SNF1 subfamily. As to quaternary structure, tetramer, composed of 2 regulatory (R) and 2 catalytic (C) subunits. In the presence of cAMP it dissociates into 2 active monomeric C subunits and an R dimer that binds four cAMP molecules. Post-translationally, phosphorylated on Thr-243 in response to oxidative stress and during dauer development. Phosphorylation at Thr-243 is increased in response to sodium azide or the AMP analog AICAR (5-amino-1-(5-phospho-beta-D-ribosyl)imidazole-4-carboxamide). In terms of tissue distribution, expressed in the pharynx, the ventral cord, neurons including the hermaphrodite-specific neuron, body wall muscles, the vulva, the excretory canal, and weakly in the intestine.

The catalysed reaction is L-seryl-[protein] + ATP = O-phospho-L-seryl-[protein] + ADP + H(+). The enzyme catalyses L-threonyl-[protein] + ATP = O-phospho-L-threonyl-[protein] + ADP + H(+). With respect to regulation, activated by phosphorylation. In terms of biological role, acts as a sensor that couples lifespan to information about energy levels and insulin-like signals. Role in motility and response to oxidative stress. Involved in the establishment of germline stem cell (GSC) quiescence during dauer development. Plays a role in axon regrowth after axotomy in PLM neurons. Plays a role in the maintenance of glycogen stores which are necessary for resistance to hyperosmotic stress. Plays a role in the regulation of flp-7 secretion from ASI neurons. Keeps the CREB-regulated transcription coactivator 1 homolog crtc-1 inactive which in turn inhibits flp-7 secretion. Following serotonin signaling, derepresses crtc-1 which stimulates flp-7 secretion and subsequent body fat loss. This Caenorhabditis elegans protein is 5'-AMP-activated protein kinase catalytic subunit alpha-2.